Here is a 270-residue protein sequence, read N- to C-terminus: Putative carboxymethylenebutenolidase (270 aa).

Catalysis depends on residues Cys-147, Asp-204, and His-236.

The protein belongs to the dienelactone hydrolase family.

The enzyme catalyses 2-(5-oxo-2,5-dihydrofuran-2-ylidene)acetate + H2O = 4-oxohex-2-enedioate + H(+). The chain is Putative carboxymethylenebutenolidase (ysgA) from Salmonella typhi.